Here is a 337-residue protein sequence, read N- to C-terminus: Phenylalanine--tRNA ligase alpha subunit (337 aa).

Glu258 contributes to the Mg(2+) binding site.

Belongs to the class-II aminoacyl-tRNA synthetase family. Phe-tRNA synthetase alpha subunit type 1 subfamily. As to quaternary structure, tetramer of two alpha and two beta subunits. Mg(2+) is required as a cofactor.

The protein localises to the cytoplasm. The catalysed reaction is tRNA(Phe) + L-phenylalanine + ATP = L-phenylalanyl-tRNA(Phe) + AMP + diphosphate + H(+). The polypeptide is Phenylalanine--tRNA ligase alpha subunit (Burkholderia mallei (strain ATCC 23344)).